The following is a 100-amino-acid chain: Urease subunit gamma (100 aa).

The protein belongs to the urease gamma subunit family. Heterotrimer of UreA (gamma), UreB (beta) and UreC (alpha) subunits. Three heterotrimers associate to form the active enzyme.

It is found in the cytoplasm. It catalyses the reaction urea + 2 H2O + H(+) = hydrogencarbonate + 2 NH4(+). It functions in the pathway nitrogen metabolism; urea degradation; CO(2) and NH(3) from urea (urease route): step 1/1. This is Urease subunit gamma from Haemophilus influenzae (strain PittEE).